A 205-amino-acid chain; its full sequence is Small ribosomal subunit protein uS4 (205 aa).

Residues 93-171 (SRVSSVLYRS…SPHYLEVDRE (79 aa)) enclose the S4 RNA-binding domain.

The protein belongs to the universal ribosomal protein uS4 family. In terms of assembly, part of the 30S ribosomal subunit. Contacts protein S5. The interaction surface between S4 and S5 is involved in control of translational fidelity.

Functionally, one of the primary rRNA binding proteins, it binds directly to 16S rRNA where it nucleates assembly of the body of the 30S subunit. Its function is as follows. With S5 and S12 plays an important role in translational accuracy. This is Small ribosomal subunit protein uS4 from Neorickettsia sennetsu (strain ATCC VR-367 / Miyayama) (Ehrlichia sennetsu).